The following is a 104-amino-acid chain: N(4)-acetylcytidine amidohydrolase (104 aa).

In terms of domain architecture, ASCH spans 6–101 (TFFERFEHDI…EQLYMIRFKV (96 aa)). K20 acts as the Proton acceptor in catalysis. T23 acts as the Nucleophile in catalysis. The active-site Proton donor is E73.

This sequence belongs to the N(4)-acetylcytidine amidohydrolase family.

It catalyses the reaction N(4)-acetylcytidine + H2O = cytidine + acetate + H(+). The enzyme catalyses N(4)-acetyl-2'-deoxycytidine + H2O = 2'-deoxycytidine + acetate + H(+). It carries out the reaction N(4)-acetylcytosine + H2O = cytosine + acetate + H(+). Catalyzes the hydrolysis of N(4)-acetylcytidine (ac4C). This is N(4)-acetylcytidine amidohydrolase from Shewanella oneidensis (strain ATCC 700550 / JCM 31522 / CIP 106686 / LMG 19005 / NCIMB 14063 / MR-1).